Reading from the N-terminus, the 182-residue chain is U1 small nuclear ribonucleoprotein C (182 aa).

The Matrin-type zinc finger occupies 4 to 36; sequence YLCDYCQVWLTHDSQSVRKAHNAGRAHIQNVQD. The tract at residues 129–182 is disordered; the sequence is PQTTASSNTQLTQQQQSLPQTNEHQRARTHSNANNHFTKTHHQGQRSHQRFVRA. Residues 130–150 are compositionally biased toward low complexity; it reads QTTASSNTQLTQQQQSLPQTN. The segment covering 166 to 182 has biased composition (basic residues); the sequence is TKTHHQGQRSHQRFVRA.

Belongs to the U1 small nuclear ribonucleoprotein C family. As to quaternary structure, U1 snRNP is composed of the 7 core Sm proteins smb1, smd1, smd2, smd3, sme1, smf1 and smg1 (Sm proteins B, D1, D2, D3, E, F and G, respectively) that assemble in a heptameric protein ring on the Sm site of the small nuclear RNA to form the core snRNP, and at least 9 U1 snRNP-specific proteins usp101/U1-70K, usp102/U1-A, usp103/U1-C, usp106/LUC7, usp105/PRP39, usp104/PRP40, usp107/U1-H, usp108/U1-J and usp109/U1-L. usp103/U1-C interacts with U1 snRNA and the 5' splice-site region of the pre-mRNA.

It localises to the nucleus. Component of the spliceosomal U1 snRNP, which is essential for recognition of the pre-mRNA 5' splice-site and the subsequent assembly of the spliceosome. usp103/U1-C is directly involved in initial 5' splice-site recognition for both constitutive and regulated alternative splicing. The interaction with the 5' splice-site seems to precede base-pairing between the pre-mRNA and the U1 snRNA. Stimulates commitment or early (E) complex formation by stabilizing the base pairing of the 5' end of the U1 snRNA and the 5' splice-site region. The protein is U1 small nuclear ribonucleoprotein C (usp103) of Schizosaccharomyces pombe (strain 972 / ATCC 24843) (Fission yeast).